A 249-amino-acid chain; its full sequence is Small ribosomal subunit protein eS6 (249 aa).

Positions Leu223–Ala238 are enriched in basic residues. Residues Leu223–Lys249 are disordered.

It belongs to the eukaryotic ribosomal protein eS6 family. Ribosomal protein S6 is the major substrate of protein kinases in eukaryote ribosomes.

In terms of biological role, component of the 40S small ribosomal subunit. Plays an important role in controlling cell growth and proliferation through the selective translation of particular classes of mRNA. This Leishmania major protein is Small ribosomal subunit protein eS6 (RPS6).